Consider the following 127-residue polypeptide: UPF0325 protein VP2321 (127 aa).

This sequence belongs to the UPF0325 family.

The chain is UPF0325 protein VP2321 from Vibrio parahaemolyticus serotype O3:K6 (strain RIMD 2210633).